A 92-amino-acid polypeptide reads, in one-letter code: UPF0223 protein SERP0684 (92 aa).

This sequence belongs to the UPF0223 family.

The polypeptide is UPF0223 protein SERP0684 (Staphylococcus epidermidis (strain ATCC 35984 / DSM 28319 / BCRC 17069 / CCUG 31568 / BM 3577 / RP62A)).